Here is a 233-residue protein sequence, read N- to C-terminus: Protein Thf1 (233 aa).

Residues 183–204 (DKFSKDLELYRSNLDKMTQALA) are a coiled coil. Residues 212–233 (ADRKKREQRQQQASTPVAPPNE) are disordered.

This sequence belongs to the THF1 family.

Functionally, may be involved in photosynthetic membrane biogenesis. The sequence is that of Protein Thf1 from Nostoc sp. (strain PCC 7120 / SAG 25.82 / UTEX 2576).